Here is a 396-residue protein sequence, read N- to C-terminus: ATP-dependent RNA helicase eIF4A (396 aa).

The short motif at 22–50 (YSFDDLKLKEELLRGIFGYGFVEPSAIQQ) is the Q motif element. One can recognise a Helicase ATP-binding domain in the interval 53-223 (ILPIIEGKDV…SKFMKDPVRI (171 aa)). 66–73 (AQSGTGKT) contributes to the ATP binding site. The DEAD box motif lies at 171–174 (DEAD). Positions 234-395 (GIGQYYVNVE…ELPSSISELF (162 aa)) constitute a Helicase C-terminal domain.

The protein belongs to the DEAD box helicase family. eIF4A subfamily. Component of the eIF4F complex, which composition varies with external and internal environmental conditions. It is composed of at least eIF4A, eIF4E and eIF4G.

The protein resides in the cytoplasm. It catalyses the reaction ATP + H2O = ADP + phosphate + H(+). In terms of biological role, ATP-dependent RNA helicase which is a subunit of the eIF4F complex involved in cap recognition and is required for mRNA binding to ribosome. In the current model of translation initiation, eIF4A unwinds RNA secondary structures in the 5'-UTR of mRNAs which is necessary to allow efficient binding of the small ribosomal subunit, and subsequent scanning for the initiator codon. This chain is ATP-dependent RNA helicase eIF4A (TIF1), found in Kluyveromyces lactis (strain ATCC 8585 / CBS 2359 / DSM 70799 / NBRC 1267 / NRRL Y-1140 / WM37) (Yeast).